We begin with the raw amino-acid sequence, 263 residues long: Hydroxyethylthiazole kinase (263 aa).

Methionine 41 contributes to the substrate binding site. The ATP site is built by arginine 117 and serine 163. Alanine 190 contributes to the substrate binding site.

This sequence belongs to the Thz kinase family. The cofactor is Mg(2+).

It catalyses the reaction 5-(2-hydroxyethyl)-4-methylthiazole + ATP = 4-methyl-5-(2-phosphooxyethyl)-thiazole + ADP + H(+). It functions in the pathway cofactor biosynthesis; thiamine diphosphate biosynthesis; 4-methyl-5-(2-phosphoethyl)-thiazole from 5-(2-hydroxyethyl)-4-methylthiazole: step 1/1. Its function is as follows. Catalyzes the phosphorylation of the hydroxyl group of 4-methyl-5-beta-hydroxyethylthiazole (THZ). This Haemophilus influenzae (strain PittEE) protein is Hydroxyethylthiazole kinase.